A 459-amino-acid polypeptide reads, in one-letter code: Bifunctional protein GlmU (459 aa).

The segment at 1–230 (MSNRFAVILA…FDETLGVNDR (230 aa)) is pyrophosphorylase. UDP-N-acetyl-alpha-D-glucosamine is bound by residues 9-12 (LAAG), Lys23, Gln73, and 78-79 (GT). Asp103 provides a ligand contact to Mg(2+). Residues Gly140, Glu155, Asn170, and Asn228 each coordinate UDP-N-acetyl-alpha-D-glucosamine. Asn228 lines the Mg(2+) pocket. Residues 231-251 (VALSQAEIIMKNRINRKNMVN) form a linker region. Residues 252–459 (GVTIIDPSNT…VDQLLNKKKS (208 aa)) form an N-acetyltransferase region. 2 residues coordinate UDP-N-acetyl-alpha-D-glucosamine: Arg333 and Lys351. The active-site Proton acceptor is His363. Positions 366 and 377 each coordinate UDP-N-acetyl-alpha-D-glucosamine. Residues 386–387 (NY), Ala423, and Arg440 contribute to the acetyl-CoA site.

In the N-terminal section; belongs to the N-acetylglucosamine-1-phosphate uridyltransferase family. This sequence in the C-terminal section; belongs to the transferase hexapeptide repeat family. In terms of assembly, homotrimer. Requires Mg(2+) as cofactor.

It localises to the cytoplasm. It catalyses the reaction alpha-D-glucosamine 1-phosphate + acetyl-CoA = N-acetyl-alpha-D-glucosamine 1-phosphate + CoA + H(+). The catalysed reaction is N-acetyl-alpha-D-glucosamine 1-phosphate + UTP + H(+) = UDP-N-acetyl-alpha-D-glucosamine + diphosphate. It participates in nucleotide-sugar biosynthesis; UDP-N-acetyl-alpha-D-glucosamine biosynthesis; N-acetyl-alpha-D-glucosamine 1-phosphate from alpha-D-glucosamine 6-phosphate (route II): step 2/2. Its pathway is nucleotide-sugar biosynthesis; UDP-N-acetyl-alpha-D-glucosamine biosynthesis; UDP-N-acetyl-alpha-D-glucosamine from N-acetyl-alpha-D-glucosamine 1-phosphate: step 1/1. The protein operates within bacterial outer membrane biogenesis; LPS lipid A biosynthesis. Functionally, catalyzes the last two sequential reactions in the de novo biosynthetic pathway for UDP-N-acetylglucosamine (UDP-GlcNAc). The C-terminal domain catalyzes the transfer of acetyl group from acetyl coenzyme A to glucosamine-1-phosphate (GlcN-1-P) to produce N-acetylglucosamine-1-phosphate (GlcNAc-1-P), which is converted into UDP-GlcNAc by the transfer of uridine 5-monophosphate (from uridine 5-triphosphate), a reaction catalyzed by the N-terminal domain. In Bacillus cereus (strain G9842), this protein is Bifunctional protein GlmU.